Consider the following 1141-residue polypeptide: Translocase of chloroplast 125, chloroplastic (1141 aa).

Disordered regions lie at residues 1–177 (MDAL…ISGY) and 325–431 (GFVE…EANE). Basic and acidic residues-rich tracts occupy residues 57–72 (RVPE…KRDG) and 107–121 (IDGR…REDL). The span at 132–150 (YDDDDDDEEEEEDGSEEGE) shows a compositional bias: acidic residues. Low complexity predominate over residues 151 to 167 (STSSSIINSEYSSSASN). The segment covering 328 to 353 (EAEEAESDVFTEGEDGYDDEDEDGDI) has biased composition (acidic residues). 2 stretches are compositionally biased toward low complexity: residues 389–401 (RSSA…TTAT) and 408–429 (TASS…SSEA). Residues 505–734 (DFACTILVLG…KLQEASTPGK (230 aa)) form the AIG1-type G domain. A G1 region spans residues 514–521 (GKTGVGKS). 517–522 (GVGKSA) contacts GTP. A Mg(2+)-binding site is contributed by Ser521. A G2 region spans residues 541–545 (STTKV). A G3 region spans residues 561–564 (DTPG). The interval 633–636 (THAS) is G4. GTP contacts are provided by residues His634 and 682–683 (EN). A G5 region spans residues 682-684 (ENH). Disordered regions lie at residues 758–795 (QLKM…PFRP) and 832–871 (IRRR…AVPM). Residues 770–789 (EDSDDDSDEEDEEEGDEYDD) show a composition bias toward acidic residues. Over residues 832–841 (IRRRRERKKQ) the composition is skewed to basic residues. The helical transmembrane segment at 1116 to 1136 (MVLIGIVPILRSLINCRFGFG) threads the bilayer.

It belongs to the TRAFAC class TrmE-Era-EngA-EngB-Septin-like GTPase superfamily. AIG1/Toc34/Toc159-like paraseptin GTPase family. TOC159 subfamily. As to quaternary structure, part of the TOC core complex. It depends on Mg(2+) as a cofactor.

It localises to the plastid. It is found in the chloroplast outer membrane. In terms of biological role, GTPase involved in protein precursor import into chloroplasts. Seems to recognize chloroplast-destined precursor proteins and regulate their presentation to the translocation channel through GTP hydrolysis. Probably specialized in the import of nuclear encoded non-photosynthetic preproteins from the cytoplasm to the chloroplast. The polypeptide is Translocase of chloroplast 125, chloroplastic (Physcomitrium patens (Spreading-leaved earth moss)).